We begin with the raw amino-acid sequence, 106 residues long: Protein translocase subunit SecE (106 aa).

A run of 2 helical transmembrane segments spans residues 20-40 (LPIRVIGMAIALVIAFILAAI) and 75-95 (IVIGVTMIASLFFWAVDSIIV).

This sequence belongs to the SecE/SEC61-gamma family. In terms of assembly, component of the Sec protein translocase complex. Heterotrimer consisting of SecY, SecE and SecG subunits. The heterotrimers can form oligomers, although 1 heterotrimer is thought to be able to translocate proteins. Interacts with the ribosome. Interacts with SecDF, and other proteins may be involved. Interacts with SecA.

The protein resides in the cell inner membrane. Essential subunit of the Sec protein translocation channel SecYEG. Clamps together the 2 halves of SecY. May contact the channel plug during translocation. In Haemophilus influenzae (strain ATCC 51907 / DSM 11121 / KW20 / Rd), this protein is Protein translocase subunit SecE.